A 1127-amino-acid polypeptide reads, in one-letter code: Genome polyprotein (1127 aa).

Positions 1–15 are interaction with host EXOC1; the sequence is MNNQRKKARSTPFNM. Residues 1-101 lie on the Cytoplasmic side of the membrane; sequence MNNQRKKARS…LNILNRRRRT (101 aa). Residues 37-72 form a hydrophobic; homodimerization of capsid protein C region; the sequence is MLQGRGPLKLFMALVALPRFLTIPPTAGILKRWGTI. Positions 101–114 are cleaved as a propeptide — ER anchor for the capsid protein C, removed in mature form by serine protease NS3; it reads TAGVIIMLIPTVMA. A helical transmembrane segment spans residues 102–122; the sequence is AGVIIMLIPTVMAFHLTTRNG. The Extracellular portion of the chain corresponds to 123-238; the sequence is EPHMIVSRQE…GAWKRACRME (116 aa). A glycan (N-linked (GlcNAc...) asparagine; by host) is linked at asparagine 183. Residues 239–259 traverse the membrane as a helical segment; the sequence is TWILRHPGFTIMAAILAYTIG. The Cytoplasmic portion of the chain corresponds to 260–265; that stretch reads TTHFQR. The chain crosses the membrane as a helical span at residues 266-280; the sequence is GLILILQTAVAPSMT. Over 281 to 725 the chain is Extracellular; the sequence is MRCIGISNRD…LHQVFGAIYG (445 aa). Cystine bridges form between cysteine 283–cysteine 310, cysteine 340–cysteine 401, cysteine 354–cysteine 385, and cysteine 372–cysteine 396. N-linked (GlcNAc...) asparagine; by host glycosylation is present at asparagine 347. The segment at 378–391 is fusion peptide; it reads DRGWGNGCGLFGKG. N-linked (GlcNAc...) asparagine; by host glycosylation occurs at asparagine 433. Cystine bridges form between cysteine 465-cysteine 565 and cysteine 582-cysteine 613. A helical transmembrane segment spans residues 726 to 746; sequence AAFSGVSWTMKILIGVIITWI. The Cytoplasmic portion of the chain corresponds to 747–754; it reads GMNSRSTS. Residues 755-773 form a helical membrane-spanning segment; that stretch reads LSVSLVLVGVITLYLGAMV. The Extracellular segment spans residues 774 to 1127; it reads QADSGCVVSW…ENLVTSLVTA (354 aa). 5 disulfide bridges follow: cysteine 779–cysteine 790, cysteine 830–cysteine 918, cysteine 954–cysteine 998, cysteine 1055–cysteine 1104, and cysteine 1066–cysteine 1088. N-linked (GlcNAc...) asparagine; by host glycans are attached at residues asparagine 905 and asparagine 982.

Homodimer. Interacts (via N-terminus) with host EXOC1 (via C-terminus); this interaction results in EXOC1 degradation through the proteasome degradation pathway. In terms of assembly, forms heterodimers with envelope protein E in the endoplasmic reticulum and Golgi. As to quaternary structure, homodimer; in the endoplasmic reticulum and Golgi. Interacts with protein prM. Interacts with non-structural protein 1. Homodimer; Homohexamer when secreted. Interacts with envelope protein E. Post-translationally, specific enzymatic cleavages in vivo yield mature proteins. Cleavages in the lumen of endoplasmic reticulum are performed by host signal peptidase, wereas cleavages in the cytoplasmic side are performed by the Serine protease NS3. Signal cleavage at the 2K-4B site requires a prior NS3 protease-mediated cleavage at the 4A-2K site. Cleaved in post-Golgi vesicles by a host furin, releasing the mature small envelope protein M, and peptide pr. This cleavage is incomplete as up to 30% of viral particles still carry uncleaved prM. In terms of processing, N-glycosylated. Post-translationally, N-glycosylated. The excreted form is glycosylated and this is required for efficient secretion of the protein from infected cells.

The protein localises to the virion. Its subcellular location is the host nucleus. It is found in the host cytoplasm. It localises to the host perinuclear region. The protein resides in the secreted. The protein localises to the virion membrane. Its subcellular location is the host endoplasmic reticulum membrane. Plays a role in virus budding by binding to the cell membrane and gathering the viral RNA into a nucleocapsid that forms the core of a mature virus particle. During virus entry, may induce genome penetration into the host cytoplasm after hemifusion induced by the surface proteins. Can migrate to the cell nucleus where it modulates host functions. Overcomes the anti-viral effects of host EXOC1 by sequestering and degrading the latter through the proteasome degradation pathway. In terms of biological role, inhibits RNA silencing by interfering with host Dicer. Functionally, prevents premature fusion activity of envelope proteins in trans-Golgi by binding to envelope protein E at pH6.0. After virion release in extracellular space, gets dissociated from E dimers. Its function is as follows. Acts as a chaperone for envelope protein E during intracellular virion assembly by masking and inactivating envelope protein E fusion peptide. prM is the only viral peptide matured by host furin in the trans-Golgi network probably to avoid catastrophic activation of the viral fusion activity in acidic GolGi compartment prior to virion release. prM-E cleavage is inefficient, and many virions are only partially matured. These uncleaved prM would play a role in immune evasion. May play a role in virus budding. Exerts cytotoxic effects by activating a mitochondrial apoptotic pathway through M ectodomain. May display a viroporin activity. In terms of biological role, binds to host cell surface receptor and mediates fusion between viral and cellular membranes. Envelope protein is synthesized in the endoplasmic reticulum in the form of heterodimer with protein prM. They play a role in virion budding in the ER, and the newly formed immature particle is covered with 60 spikes composed of heterodimer between precursor prM and envelope protein E. The virion is transported to the Golgi apparatus where the low pH causes dissociation of PrM-E heterodimers and formation of E homodimers. prM-E cleavage is inefficient, and many virions are only partially matured. These uncleaved prM would play a role in immune evasion. Functionally, involved in immune evasion, pathogenesis and viral replication. Once cleaved off the polyprotein, is targeted to three destinations: the viral replication cycle, the plasma membrane and the extracellular compartment. Essential for viral replication. Required for formation of the replication complex and recruitment of other non-structural proteins to the ER-derived membrane structures. Excreted as a hexameric lipoparticle that plays a role against host immune response. Antagonizing the complement function. Binds to the host macrophages and dendritic cells. Inhibits signal transduction originating from Toll-like receptor 3 (TLR3). Its function is as follows. Disrupts the host endothelial glycocalyx layer of host pulmonary microvascular endothelial cells, inducing degradation of sialic acid and shedding of heparan sulfate proteoglycans. NS1 induces expression of sialidases, heparanase, and activates cathepsin L, which activates heparanase via enzymatic cleavage. These effects are probably linked to the endothelial hyperpermeability observed in severe dengue disease. The chain is Genome polyprotein from Dengue virus type 2 (strain China/D2-04) (DENV-2).